Consider the following 748-residue polypeptide: Semaphorin-3B (748 aa).

A signal peptide spans 1–25 (MGRAEAAAMIPGLALLWVAGLGDTA). Positions 30 to 512 (RLRLSFQELQ…SRSAVAQIAL (483 aa)) constitute a Sema domain. N82 carries an N-linked (GlcNAc...) asparagine glycan. An intrachain disulfide couples C102 to C113. Residue N124 is glycosylated (N-linked (GlcNAc...) asparagine). Disulfide bonds link C131/C140, C268/C379, C292/C339, C515/C533, and C643/C709. Residues 561–659 (PSTLCSGDSS…FSQPLRRLVL (99 aa)) enclose the Ig-like C2-type domain. The tract at residues 708–748 (MCRPQPGHHSVAADSRRKGRNRRMHVSELRAERGPRSAAHW) is disordered. The segment covering 732–742 (HVSELRAERGP) has biased composition (basic and acidic residues).

It belongs to the semaphorin family.

The protein resides in the secreted. Functionally, inhibits axonal extension by providing local signals to specify territories inaccessible for growing axons. The polypeptide is Semaphorin-3B (Sema3b) (Mus musculus (Mouse)).